The following is a 40-amino-acid chain: Bomanin Short 6 (40 aa).

A signal peptide spans 1-18 (MKLLSITFLFGLLALASA). A propeptide spans 19-23 (NPLSP) (removed by a dipeptidylpeptidase). A disulfide bridge connects residues cysteine 32 and cysteine 35.

This sequence belongs to the bomanin family.

It localises to the secreted. Secreted immune-induced peptide induced by Toll signaling. Has a role in resistance to bacterial and fungal infections. The strength of antimicrobial activity appears to correlate with the overall level of expression. This chain is Bomanin Short 6, found in Drosophila melanogaster (Fruit fly).